We begin with the raw amino-acid sequence, 232 residues long: Ubiquinone biosynthesis O-methyltransferase (232 aa).

Arg-36, Gly-55, Asp-76, and Leu-120 together coordinate S-adenosyl-L-methionine.

This sequence belongs to the methyltransferase superfamily. UbiG/COQ3 family.

The catalysed reaction is a 3-demethylubiquinol + S-adenosyl-L-methionine = a ubiquinol + S-adenosyl-L-homocysteine + H(+). It catalyses the reaction a 3-(all-trans-polyprenyl)benzene-1,2-diol + S-adenosyl-L-methionine = a 2-methoxy-6-(all-trans-polyprenyl)phenol + S-adenosyl-L-homocysteine + H(+). The protein operates within cofactor biosynthesis; ubiquinone biosynthesis. Its function is as follows. O-methyltransferase that catalyzes the 2 O-methylation steps in the ubiquinone biosynthetic pathway. The chain is Ubiquinone biosynthesis O-methyltransferase from Pseudomonas syringae pv. tomato (strain ATCC BAA-871 / DC3000).